The primary structure comprises 548 residues: Calcium-transporting ATPase (548 aa).

Residues 1–21 (MNFKSTVITAMCCFFSFAVLA) form the signal peptide. Residues Asp37 and Thr78 each coordinate a divalent metal cation. The Phosphothreonine intermediate role is filled by Thr78. Substrate contacts are provided by residues Asn99 and 160 to 162 (KDR). The short motif at 179–187 (DGKTGDWIT) is the ATP-binding element. A divalent metal cation-binding residues include Asp305, His309, Asp352, His353, and His488.

The cofactor is Mg(2+).

The protein resides in the cell inner membrane. The enzyme catalyses Ca(2+)(in) + ATP + H2O = Ca(2+)(out) + ADP + phosphate + H(+). Its activity is regulated as follows. Completely inhibited by vanadate(3-). Also inhibited by lanthanoid atom and phosphate. Not inhibited by N-ethylmaleimide, 1,3-dicyclohexylcarbodiimide, oligomycin, ouabain, valinomycin, nigericin, thapsigargin, cyclopiazonic acid or fluorescein isothiocyanate. Its function is as follows. Catalyzes the hydrolysis of ATP coupled with the transport of calcium. Has some hydrolysis activity also with dATP, GTP, UTP, ITP and 4-nitrophenyl phosphate as substrate. No activity with ADP, CTP, acetyl dihydrogen phosphate or AMP-PNP as substrate. The sequence is that of Calcium-transporting ATPase from Myroides odoratus (Flavobacterium odoratum).